The chain runs to 266 residues: Undecaprenyl-diphosphatase (266 aa).

Helical transmembrane passes span 4-24 (ILRV…PISS), 39-59 (LPIV…IIYY), 88-108 (LNLI…GIFI), 114-134 (LFTF…LFLI), 147-167 (IFFS…PGIS), 186-206 (SLEI…FLKY), 214-234 (IIFN…FGLF), and 246-266 (SKLY…YFLV).

Belongs to the UppP family.

The protein localises to the cell inner membrane. The enzyme catalyses di-trans,octa-cis-undecaprenyl diphosphate + H2O = di-trans,octa-cis-undecaprenyl phosphate + phosphate + H(+). Catalyzes the dephosphorylation of undecaprenyl diphosphate (UPP). Confers resistance to bacitracin. This is Undecaprenyl-diphosphatase from Borrelia recurrentis (strain A1).